Here is a 412-residue protein sequence, read N- to C-terminus: Maintenance of mitochondrial morphology protein 1 (412 aa).

Residues 1–81 (MTKELIKTEA…PANNWTFTQG (81 aa)) are Lumenal-facing. Residues 82–102 (LVLGQISVIFIIIVFVKFFVF) traverse the membrane as a helical segment. At 103–412 (ADSSTIPTKK…RSDSGTSENL (310 aa)) the chain is on the cytoplasmic side. Residues 165–382 (SPESLDWFNV…EPRFQVVRLP (218 aa)) enclose the SMP-LTD domain. Positions 389-412 (KNTREPINKKTSVSRSDSGTSENL) are disordered. Polar residues predominate over residues 397-412 (KKTSVSRSDSGTSENL).

It belongs to the MMM1 family. In terms of assembly, homodimer. Component of the ER-mitochondria encounter structure (ERMES) or MDM complex, composed of MMM1, MDM10, MDM12 and MDM34. An MMM1 homodimer associates with one molecule of MDM12 on each side in a pairwise head-to-tail manner, and the SMP-LTD domains of MMM1 and MDM12 generate a continuous hydrophobic tunnel for phospholipid trafficking.

Its subcellular location is the endoplasmic reticulum membrane. Functionally, component of the ERMES/MDM complex, which serves as a molecular tether to connect the endoplasmic reticulum (ER) and mitochondria. Components of this complex are involved in the control of mitochondrial shape and protein biogenesis, and function in nonvesicular lipid trafficking between the ER and mitochondria. The MDM12-MMM1 subcomplex functions in the major beta-barrel assembly pathway that is responsible for biogenesis of all outer membrane beta-barrel proteins, and acts in a late step after the SAM complex. The MDM10-MDM12-MMM1 subcomplex further acts in the TOM40-specific pathway after the action of the MDM12-MMM1 complex. Essential for establishing and maintaining the structure of mitochondria and maintenance of mtDNA nucleoids. The polypeptide is Maintenance of mitochondrial morphology protein 1 (Candida tropicalis (strain ATCC MYA-3404 / T1) (Yeast)).